The sequence spans 505 residues: Maturase K (505 aa).

Belongs to the intron maturase 2 family. MatK subfamily.

It localises to the plastid. It is found in the chloroplast. In terms of biological role, usually encoded in the trnK tRNA gene intron. Probably assists in splicing its own and other chloroplast group II introns. This Ulmus parvifolia (Chinese elm) protein is Maturase K.